The chain runs to 333 residues: PDZ domain-containing protein GIPC1 (333 aa).

Residues 1-11 (MPLGLGRRKKA) show a composition bias toward basic residues. Residues 1-55 (MPLGLGRRKKAPPLVENEEAEPSRSGLGVGEPGPLGGSGAGESQMGLPPPPASLR) form a disordered region. The span at 27–40 (LGVGEPGPLGGSGA) shows a compositional bias: gly residues. Position 68 is a phosphoserine (Ser-68). In terms of domain architecture, PDZ spans 133-213 (EVEVFKSEDA…GRTFTLKLTE (81 aa)). Residues 221–244 (ISQRSSGGHPGSGPQLGTGRGTLR) form a disordered region. Ser-222, Ser-225, and Ser-232 each carry phosphoserine. Gly residues predominate over residues 228-240 (GHPGSGPQLGTGR). Thr-242 is subject to Phosphothreonine. At Ser-247 the chain carries Phosphoserine.

The protein belongs to the GIPC family. In terms of assembly, interacts with SDC4/syndecan-4 and SEMA4C/semaphorin-4C. Interacts with RGS19 (C-terminus), GLUT1 (C-terminus), ACTN1, KIF1B, MYO6 and PLEKHG5. Widely expressed.

It localises to the cytoplasm. It is found in the membrane. In terms of biological role, may be involved in G protein-linked signaling. This Rattus norvegicus (Rat) protein is PDZ domain-containing protein GIPC1 (Gipc1).